A 92-amino-acid chain; its full sequence is Small ribosomal subunit protein bS16 (92 aa).

The protein belongs to the bacterial ribosomal protein bS16 family.

The polypeptide is Small ribosomal subunit protein bS16 (Staphylococcus carnosus (strain TM300)).